We begin with the raw amino-acid sequence, 107 residues long: Ig kappa chain V region 4135 (107 aa).

Residues 1-24 form a framework-1 region; sequence ADIVMTQTPASVSEPVGGTVTIKC. Residues 25–35 are complementarity-determining-1; that stretch reads QTSQSIDDYLS. Residues 36-50 form a framework-2 region; the sequence is WYQQKPGQPPKGLIY. The interval 51–57 is complementarity-determining-2; it reads RASTLAS. The framework-3 stretch occupies residues 58-89; the sequence is GVPSRFRGSGSGTDFTLTISDLECADAATYYC. The interval 90–96 is complementarity-determining-3; sequence QSTYGVG. The interval 97–106 is framework-4; the sequence is FGGGTEVVVK.

The chain is Ig kappa chain V region 4135 from Oryctolagus cuniculus (Rabbit).